The primary structure comprises 239 residues: tRNA1(Val) (adenine(37)-N6)-methyltransferase (239 aa).

This sequence belongs to the methyltransferase superfamily. tRNA (adenine-N(6)-)-methyltransferase family.

It localises to the cytoplasm. It catalyses the reaction adenosine(37) in tRNA1(Val) + S-adenosyl-L-methionine = N(6)-methyladenosine(37) in tRNA1(Val) + S-adenosyl-L-homocysteine + H(+). In terms of biological role, specifically methylates the adenine in position 37 of tRNA(1)(Val) (anticodon cmo5UAC). The polypeptide is tRNA1(Val) (adenine(37)-N6)-methyltransferase (Vibrio campbellii (strain ATCC BAA-1116)).